A 142-amino-acid chain; its full sequence is Hemoglobin subunit alpha-B (142 aa).

One can recognise a Globin domain in the interval 2–142 (VLSPTDKSNV…VSTVLTSKYR (141 aa)). O2 is bound at residue His59. Heme b is bound at residue His88.

The protein belongs to the globin family. Heterotetramer of two alpha chains and two beta chains. In terms of tissue distribution, red blood cells.

Its function is as follows. Involved in oxygen transport from the lung to the various peripheral tissues. The polypeptide is Hemoglobin subunit alpha-B (HBAB) (Otolemur crassicaudatus (Brown greater galago)).